Reading from the N-terminus, the 330-residue chain is Ferredoxin--NADP reductase (330 aa).

Residues glutamate 35, glutamine 43, tyrosine 48, valine 90, phenylalanine 123, aspartate 285, and threonine 326 each contribute to the FAD site.

This sequence belongs to the ferredoxin--NADP reductase type 2 family. In terms of assembly, homodimer. FAD serves as cofactor.

It catalyses the reaction 2 reduced [2Fe-2S]-[ferredoxin] + NADP(+) + H(+) = 2 oxidized [2Fe-2S]-[ferredoxin] + NADPH. This is Ferredoxin--NADP reductase from Streptococcus agalactiae serotype Ia (strain ATCC 27591 / A909 / CDC SS700).